Reading from the N-terminus, the 787-residue chain is Disease resistance protein ADR1 (787 aa).

One can recognise an RPW8 domain in the interval 1-149 (MASFIDLFAG…LLTERNDSLS (149 aa)). Residues 96–112 (HANKMKDLEKQISRFLN) adopt a coiled-coil conformation. Residue 193 to 200 (GMSGSGKT) coordinates ATP. Residues 247–414 (HQRKLVILDD…PLDLLTSVWV (168 aa)) enclose the NB-ARC domain. 4 LRR repeats span residues 549–575 (MSRL…IFAN), 576–599 (LAKL…TIPL), 650–674 (ITSL…LSNV), and 722–745 (LGSL…VAAL).

The protein belongs to the disease resistance NB-LRR family.

Its function is as follows. Disease resistance (R) protein that mediates resistance against Hyaloperonospora parasitica in a salicylic acid-dependent manner. Also mediates resistance against Erysiphe cichoracearum is both salicylic acid-dependent and partially NPR1-dependent. Resistance proteins guard the plant against pathogens that contain an appropriate avirulence protein via an indirect interaction with this avirulence protein. That triggers a defense system including the hypersensitive response, which restricts the pathogen growth. This chain is Disease resistance protein ADR1 (ADR1), found in Arabidopsis thaliana (Mouse-ear cress).